The sequence spans 421 residues: 2',3'-cyclic-nucleotide 3'-phosphodiesterase (421 aa).

Serine 6 and serine 9 each carry phosphoserine. Phosphotyrosine is present on tyrosine 110. Position 170 is a phosphoserine (serine 170). The active-site Proton acceptor is histidine 251. Residue threonine 253 participates in substrate binding. Catalysis depends on histidine 330, which acts as the Proton donor. Threonine 332 contacts substrate. Serine 359 is modified (phosphoserine). Cysteine methyl ester is present on cysteine 418. Cysteine 418 is lipidated: S-farnesyl cysteine. The propeptide at 419-421 (TII) is removed in mature form.

The protein belongs to the 2H phosphoesterase superfamily. CNPase family. Exists as monomers and homodimers.

It localises to the membrane. Its subcellular location is the melanosome. It catalyses the reaction a nucleoside 2',3'-cyclic phosphate + H2O = a nucleoside 2'-phosphate + H(+). Functionally, catalyzes the formation of 2'-nucleotide products from 2',3'-cyclic substrates. May participate in RNA metabolism in the myelinating cell, CNP is the third most abundant protein in central nervous system myelin. The sequence is that of 2',3'-cyclic-nucleotide 3'-phosphodiesterase from Homo sapiens (Human).